The sequence spans 156 residues: ATP synthase subunit b (156 aa).

The helical transmembrane segment at 7–27 (LIGQLIAFALFVAFCMKFVWP) threads the bilayer.

Belongs to the ATPase B chain family. In terms of assembly, F-type ATPases have 2 components, F(1) - the catalytic core - and F(0) - the membrane proton channel. F(1) has five subunits: alpha(3), beta(3), gamma(1), delta(1), epsilon(1). F(0) has three main subunits: a(1), b(2) and c(10-14). The alpha and beta chains form an alternating ring which encloses part of the gamma chain. F(1) is attached to F(0) by a central stalk formed by the gamma and epsilon chains, while a peripheral stalk is formed by the delta and b chains.

The protein resides in the cell inner membrane. In terms of biological role, f(1)F(0) ATP synthase produces ATP from ADP in the presence of a proton or sodium gradient. F-type ATPases consist of two structural domains, F(1) containing the extramembraneous catalytic core and F(0) containing the membrane proton channel, linked together by a central stalk and a peripheral stalk. During catalysis, ATP synthesis in the catalytic domain of F(1) is coupled via a rotary mechanism of the central stalk subunits to proton translocation. Component of the F(0) channel, it forms part of the peripheral stalk, linking F(1) to F(0). This is ATP synthase subunit b from Actinobacillus pleuropneumoniae serotype 7 (strain AP76).